Reading from the N-terminus, the 336-residue chain is Dihydroorotate dehydrogenase (quinone) (336 aa).

Residues 62–66 (AGLDK) and threonine 86 contribute to the FMN site. Substrate is bound at residue lysine 66. Residue 111 to 115 (NRMGF) coordinates substrate. FMN-binding residues include asparagine 139 and asparagine 172. Substrate is bound at residue asparagine 172. Serine 175 (nucleophile) is an active-site residue. Asparagine 177 contacts substrate. FMN is bound by residues lysine 217 and threonine 245. 246–247 (NT) contributes to the substrate binding site. FMN contacts are provided by residues glycine 268, glycine 297, and 318 to 319 (YS).

It belongs to the dihydroorotate dehydrogenase family. Type 2 subfamily. As to quaternary structure, monomer. It depends on FMN as a cofactor.

It is found in the cell membrane. The enzyme catalyses (S)-dihydroorotate + a quinone = orotate + a quinol. It participates in pyrimidine metabolism; UMP biosynthesis via de novo pathway; orotate from (S)-dihydroorotate (quinone route): step 1/1. Catalyzes the conversion of dihydroorotate to orotate with quinone as electron acceptor. The polypeptide is Dihydroorotate dehydrogenase (quinone) (Serratia proteamaculans (strain 568)).